The primary structure comprises 508 residues: Cobyric acid synthase (508 aa).

Residues 266-464 (SLRIAVVAYP…AHGLFESTEV (199 aa)) form the GATase cobBQ-type domain. C347 (nucleophile) is an active-site residue. H456 is a catalytic residue.

It belongs to the CobB/CobQ family. CobQ subfamily.

It functions in the pathway cofactor biosynthesis; adenosylcobalamin biosynthesis. Functionally, catalyzes amidations at positions B, D, E, and G on adenosylcobyrinic A,C-diamide. NH(2) groups are provided by glutamine, and one molecule of ATP is hydrogenolyzed for each amidation. The protein is Cobyric acid synthase of Methylibium petroleiphilum (strain ATCC BAA-1232 / LMG 22953 / PM1).